The sequence spans 213 residues: Thymidylate kinase (213 aa).

9 to 16 (GIEGCGKT) lines the ATP pocket.

It belongs to the thymidylate kinase family.

It carries out the reaction dTMP + ATP = dTDP + ADP. In terms of biological role, phosphorylation of dTMP to form dTDP in both de novo and salvage pathways of dTTP synthesis. The sequence is that of Thymidylate kinase from Geobacter sulfurreducens (strain ATCC 51573 / DSM 12127 / PCA).